The chain runs to 355 residues: MADVLKTVWWDEVPCLIDQRLLPATLDIVRCEDLNSVIEAIRSMQVRGAPAIGITAAYGMALAAQRSTAQTSSKLLEKLAKAKALLDATRPTAINLAWATQRMLDVAQANHTLEVDQLRQRLLAEAEAIRDQDEAMCRAIGQHGKVLLAQSRNVLTHCNAGGLATAAYGTALAPIRAVHEDGQPIHVWVDETRPFLQGARLTAWELQQAGIDLTLITDNMAAYFMQQGQVDCIIVGSDRIAANGDVANKIGTYGLAVLAKAHNIPLYVAAPTSTIDLQTADGAAIPIEQRSTQEVTHIGQQAIAAAGIKVAHPAFDVTPAHLVTAIITEQGIAYPPFAEQLQTMVEAANAANAGK.

Substrate is bound by residues 47 to 49 (RGA), arginine 90, and glutamine 197. The Proton donor role is filled by aspartate 238. Position 248–249 (248–249 (NK)) interacts with substrate.

This sequence belongs to the eIF-2B alpha/beta/delta subunits family. MtnA subfamily.

It carries out the reaction 5-(methylsulfanyl)-alpha-D-ribose 1-phosphate = 5-(methylsulfanyl)-D-ribulose 1-phosphate. Its pathway is amino-acid biosynthesis; L-methionine biosynthesis via salvage pathway; L-methionine from S-methyl-5-thio-alpha-D-ribose 1-phosphate: step 1/6. Functionally, catalyzes the interconversion of methylthioribose-1-phosphate (MTR-1-P) into methylthioribulose-1-phosphate (MTRu-1-P). This chain is Methylthioribose-1-phosphate isomerase, found in Herpetosiphon aurantiacus (strain ATCC 23779 / DSM 785 / 114-95).